The chain runs to 343 residues: Probable dual-specificity RNA methyltransferase RlmN (343 aa).

Glu-91 functions as the Proton acceptor in the catalytic mechanism. Residues Tyr-97 to Asp-327 form the Radical SAM core domain. Cys-104 and Cys-332 form a disulfide bridge. The [4Fe-4S] cluster site is built by Cys-111, Cys-115, and Cys-118. S-adenosyl-L-methionine contacts are provided by residues Gly-158–Glu-159, Ser-190, Ser-213–His-215, and Asn-289. Cys-332 functions as the S-methylcysteine intermediate in the catalytic mechanism.

Belongs to the radical SAM superfamily. RlmN family. [4Fe-4S] cluster serves as cofactor.

Its subcellular location is the cytoplasm. The catalysed reaction is adenosine(2503) in 23S rRNA + 2 reduced [2Fe-2S]-[ferredoxin] + 2 S-adenosyl-L-methionine = 2-methyladenosine(2503) in 23S rRNA + 5'-deoxyadenosine + L-methionine + 2 oxidized [2Fe-2S]-[ferredoxin] + S-adenosyl-L-homocysteine. It carries out the reaction adenosine(37) in tRNA + 2 reduced [2Fe-2S]-[ferredoxin] + 2 S-adenosyl-L-methionine = 2-methyladenosine(37) in tRNA + 5'-deoxyadenosine + L-methionine + 2 oxidized [2Fe-2S]-[ferredoxin] + S-adenosyl-L-homocysteine. Functionally, specifically methylates position 2 of adenine 2503 in 23S rRNA and position 2 of adenine 37 in tRNAs. In Clostridium novyi (strain NT), this protein is Probable dual-specificity RNA methyltransferase RlmN.